A 567-amino-acid chain; its full sequence is 2-succinyl-5-enolpyruvyl-6-hydroxy-3-cyclohexene-1-carboxylate synthase (567 aa).

It belongs to the TPP enzyme family. MenD subfamily. Homodimer. Mg(2+) is required as a cofactor. Requires Mn(2+) as cofactor. Thiamine diphosphate serves as cofactor.

It carries out the reaction isochorismate + 2-oxoglutarate + H(+) = 5-enolpyruvoyl-6-hydroxy-2-succinyl-cyclohex-3-ene-1-carboxylate + CO2. It functions in the pathway quinol/quinone metabolism; 1,4-dihydroxy-2-naphthoate biosynthesis; 1,4-dihydroxy-2-naphthoate from chorismate: step 2/7. The protein operates within quinol/quinone metabolism; menaquinone biosynthesis. Functionally, catalyzes the thiamine diphosphate-dependent decarboxylation of 2-oxoglutarate and the subsequent addition of the resulting succinic semialdehyde-thiamine pyrophosphate anion to isochorismate to yield 2-succinyl-5-enolpyruvyl-6-hydroxy-3-cyclohexene-1-carboxylate (SEPHCHC). The protein is 2-succinyl-5-enolpyruvyl-6-hydroxy-3-cyclohexene-1-carboxylate synthase of Yersinia pestis bv. Antiqua (strain Antiqua).